A 229-amino-acid chain; its full sequence is Zinc finger matrin-type protein 4 (229 aa).

Matrin-type zinc fingers lie at residues 14–44 and 72–106; these read SYCK…KVRL and DKNK…LKLL. The segment at 116–135 is disordered; that stretch reads TATPLSPLKPPRMDTAPVVA. 2 Matrin-type zinc fingers span residues 145–175 and 198–228; these read RYCG…NAAR and YRCT…NLKN.

It is found in the nucleus. The polypeptide is Zinc finger matrin-type protein 4 (ZMAT4) (Homo sapiens (Human)).